Reading from the N-terminus, the 369-residue chain is Protein FAM187B (369 aa).

Residues 1–17 (MPPMLWLLLHFAAPALG) form the signal peptide. The Extracellular portion of the chain corresponds to 18 to 335 (FYFSISCPSG…RADSVLKGLK (318 aa)). N-linked (GlcNAc...) asparagine glycosylation is found at Asn-45, Asn-68, and Asn-130. Residues 336 to 356 (LVLLVVTVLALLGALLKCIHP) form a helical membrane-spanning segment. Residues 357 to 369 (SPGRRSTQVLVVK) lie on the Cytoplasmic side of the membrane.

Belongs to the FAM187 family.

It is found in the membrane. The polypeptide is Protein FAM187B (FAM187B) (Homo sapiens (Human)).